A 282-amino-acid polypeptide reads, in one-letter code: Bis(5'-nucleosyl)-tetraphosphatase, symmetrical (282 aa).

Belongs to the Ap4A hydrolase family.

The enzyme catalyses P(1),P(4)-bis(5'-adenosyl) tetraphosphate + H2O = 2 ADP + 2 H(+). Its function is as follows. Hydrolyzes diadenosine 5',5'''-P1,P4-tetraphosphate to yield ADP. This Sodalis glossinidius (strain morsitans) protein is Bis(5'-nucleosyl)-tetraphosphatase, symmetrical.